Consider the following 628-residue polypeptide: MLRSSITQSRQLLLSPARSRTASQWLPRAGASNRISGQRFFADVKPPVVPGAPTPASPSSDTPIPPETVPKSTLADEATLPPPPPPPPAPVRKTGRFRRFLIYLILTSGFAYGGGIFLAMKSDNFHDFFTEYVPYGEDCVLYFEERDFYRRFPNTLRNANRAPKDEGNKVTIPSKSGLSWKVAEEESGADLSAKGPHMSAVEQKGDEAQIKPGTAKPEEKVAAVEKAKSDKPVKEEAPKDTTKVQEEPRKPAVPAVTPIEFATVNEGDEAVVQELVKTFNDIITVIGADESAHKFSGTIIKAKDELQKIGEKIIAIRDEARNAAQEEIKEAHATFDESARELIRRFEEARASDAAQYREEFELEREKLAHAYQEKIRTELLRAQEVAEQRLQNELVEQAIELNRKYLHEVKDLVEREREGRLSKLNELTTNVTELEKLTTDWKEVIDTNLKTQQLQVAVDAVRSVLERSTVPRPFVRELVAVKELAAEDPVVEAAIASINPTAYQRGIPSTAQIIERFRRVADEVRKASLLPEDAGIASHAASLVLSKVMFKKDAVAGSDDVESILIRTESLLEEGNIDAAAREMNTLKGWAKILSKDWLGDVRRVLEVKQALEVIETEARLQCLRVE.

Over residues 1–24 (MLRSSITQSRQLLLSPARSRTASQ) the composition is skewed to polar residues. Disordered regions lie at residues 1 to 30 (MLRS…PRAG) and 44 to 92 (VKPP…APVR). The transit peptide at 1–41 (MLRSSITQSRQLLLSPARSRTASQWLPRAGASNRISGQRFF) directs the protein to the mitochondrion. Topologically, residues 42 to 99 (ADVKPPVVPGAPTPASPSSDTPIPPETVPKSTLADEATLPPPPPPPPAPVRKTGRFRR) are mitochondrial matrix. Pro residues-rich tracts occupy residues 47-56 (PVVPGAPTPA) and 80-90 (LPPPPPPPPAP). Residues 100–120 (FLIYLILTSGFAYGGGIFLAM) traverse the membrane as a helical segment. Topologically, residues 121–628 (KSDNFHDFFT…EARLQCLRVE (508 aa)) are mitochondrial intermembrane. A disordered region spans residues 183–252 (AEEESGADLS…KVQEEPRKPA (70 aa)). The segment covering 216-250 (KPEEKVAAVEKAKSDKPVKEEAPKDTTKVQEEPRK) has biased composition (basic and acidic residues). Residues 301 to 444 (KAKDELQKIG…LEKLTTDWKE (144 aa)) adopt a coiled-coil conformation.

This sequence belongs to the MICOS complex subunit Mic60 family. In terms of assembly, component of the mitochondrial contact site and cristae organizing system (MICOS) complex.

The protein localises to the mitochondrion inner membrane. In terms of biological role, component of the MICOS complex, a large protein complex of the mitochondrial inner membrane that plays crucial roles in the maintenance of crista junctions, inner membrane architecture, and formation of contact sites to the outer membrane. Plays a role in keeping cristae membranes connected to the inner boundary membrane. Also promotes protein import via the mitochondrial intermembrane space assembly (MIA) pathway. This Aspergillus clavatus (strain ATCC 1007 / CBS 513.65 / DSM 816 / NCTC 3887 / NRRL 1 / QM 1276 / 107) protein is MICOS complex subunit mic60 (mic60).